The sequence spans 353 residues: C2 calcium-dependent domain-containing protein 4D (353 aa).

Positions 135 to 191 (CRAPDSDTASSPDSSPFGSPRPGLGRRRVSRPHSLSPEKASSADTSPHSPRRAGPPT) are disordered. Positions 140 to 150 (SDTASSPDSSP) are enriched in low complexity. Residues 217-343 (RGGQLRLSTE…PPLGGGLGPG (127 aa)) form the C2 domain.

In Homo sapiens (Human), this protein is C2 calcium-dependent domain-containing protein 4D (C2CD4D).